We begin with the raw amino-acid sequence, 346 residues long: Phenylalanine--tRNA ligase alpha subunit (346 aa).

Position 261 (Glu261) interacts with Mg(2+).

This sequence belongs to the class-II aminoacyl-tRNA synthetase family. Phe-tRNA synthetase alpha subunit type 1 subfamily. Tetramer of two alpha and two beta subunits. Mg(2+) is required as a cofactor.

The protein localises to the cytoplasm. It catalyses the reaction tRNA(Phe) + L-phenylalanine + ATP = L-phenylalanyl-tRNA(Phe) + AMP + diphosphate + H(+). The chain is Phenylalanine--tRNA ligase alpha subunit from Streptococcus agalactiae serotype III (strain NEM316).